A 312-amino-acid polypeptide reads, in one-letter code: Putative clathrin assembly protein At2g01920 (312 aa).

Residues 21–152 (LITATDEKFT…ILYYNKNMIR (132 aa)) form the ENTH domain.

It localises to the membrane. The protein resides in the clathrin-coated pit. Its subcellular location is the golgi apparatus. It is found in the cytoplasmic vesicle. The protein localises to the clathrin-coated vesicle. The protein is Putative clathrin assembly protein At2g01920 of Arabidopsis thaliana (Mouse-ear cress).